Reading from the N-terminus, the 153-residue chain is Allergen Pet c 1 (153 aa).

It belongs to the BetVI family. As to quaternary structure, may form dimers.

This Petroselinum crispum (Parsley) protein is Allergen Pet c 1.